A 111-amino-acid chain; its full sequence is Large ribosomal subunit protein uL24 (111 aa).

Over residues 48 to 65 (EKPSRSNREGGRTEREAP) the composition is skewed to basic and acidic residues. The tract at residues 48–111 (EKPSRSNREG…AKTTGEELDD (64 aa)) is disordered. The segment covering 69–80 (SNVNPIDSNGES) has biased composition (polar residues). The segment covering 86-95 (KKVEDPDTGR) has biased composition (basic and acidic residues).

The protein belongs to the universal ribosomal protein uL24 family. Part of the 50S ribosomal subunit.

Its function is as follows. One of two assembly initiator proteins, it binds directly to the 5'-end of the 23S rRNA, where it nucleates assembly of the 50S subunit. One of the proteins that surrounds the polypeptide exit tunnel on the outside of the subunit. The polypeptide is Large ribosomal subunit protein uL24 (Salinibacter ruber (strain DSM 13855 / M31)).